We begin with the raw amino-acid sequence, 333 residues long: MFSQKINYSHLFTFSITLYVEIVTGILGHGFIALVNIMDWVKRRRISSVDQILTALALTRFIYVLSMLICILLFMLCPHLPRRSEMLSAMGIFWVVNSHFSIWLTTCLGVFYFLKIANFSNSFFLYLKWRVKKVILIIILASLIFLTLHILSLGIYDQFSIAAYVGNMSYSLTDLTQFSSTFLFSNSSNVFLITNSSHVFLPINSLFMLIPFTVSLVAFLMLIFSLWKHHKKMQVNAKQPRDVSTMAHIKALQTVFSFLLLYAIYLLFLIIGILNLGLMEKIVILIFDHISGAVFPISHSFVLILGNSKLRQASLSVLPCLRCQSKDMDTMGL.

At 1–13 the chain is on the extracellular side; it reads MFSQKINYSHLFT. The N-linked (GlcNAc...) asparagine glycan is linked to Asn7. A helical transmembrane segment spans residues 14–34; the sequence is FSITLYVEIVTGILGHGFIAL. The Cytoplasmic portion of the chain corresponds to 35–60; the sequence is VNIMDWVKRRRISSVDQILTALALTR. The helical transmembrane segment at 61–81 threads the bilayer; sequence FIYVLSMLICILLFMLCPHLP. The Extracellular segment spans residues 82–90; the sequence is RRSEMLSAM. A helical transmembrane segment spans residues 91-111; it reads GIFWVVNSHFSIWLTTCLGVF. Residues 112-134 lie on the Cytoplasmic side of the membrane; it reads YFLKIANFSNSFFLYLKWRVKKV. Residues 135 to 155 form a helical membrane-spanning segment; it reads ILIIILASLIFLTLHILSLGI. Topologically, residues 156–205 are extracellular; sequence YDQFSIAAYVGNMSYSLTDLTQFSSTFLFSNSSNVFLITNSSHVFLPINS. 3 N-linked (GlcNAc...) asparagine glycosylation sites follow: Asn167, Asn186, and Asn195. A helical transmembrane segment spans residues 206–226; it reads LFMLIPFTVSLVAFLMLIFSL. Residues 227 to 253 lie on the Cytoplasmic side of the membrane; sequence WKHHKKMQVNAKQPRDVSTMAHIKALQ. Residues 254–274 form a helical membrane-spanning segment; sequence TVFSFLLLYAIYLLFLIIGIL. Residues 275-281 lie on the Extracellular side of the membrane; it reads NLGLMEK. Residues 282–302 traverse the membrane as a helical segment; that stretch reads IVILIFDHISGAVFPISHSFV. At 303–333 the chain is on the cytoplasmic side; it reads LILGNSKLRQASLSVLPCLRCQSKDMDTMGL.

The protein belongs to the G-protein coupled receptor T2R family. In terms of tissue distribution, expressed in subsets of taste receptor cells of the tongue and palate epithelium and exclusively in gustducin-positive cells. Expressed in the duodenum, antrum and fundus (part of the stomach).

It localises to the membrane. In terms of biological role, gustducin-coupled receptor implicated in the perception of bitter compounds in the oral cavity and the gastrointestinal tract. Signals through PLCB2 and the calcium-regulated cation channel TRPM5. This Mus musculus (Mouse) protein is Taste receptor type 2 member 123 (Tas2r123).